The primary structure comprises 219 residues: MLRAGAPTAGSFRTEEVHTGTTIMAVEFDGGVVVGSDSRVSAGTAVVNRVFDKLSPLHQRIFCALSGSAADAQAIADMAAYQLELHGLELEEPPLVLAAANVVKNISYKYREDLLAHLIVAGWDQREGGQVYGTMGGMLIRQPFTIGGSGSSYIYGYVDAAYKPGMTPEECRRFTTNAITLAMNRDGSSGGVIYLVTITAAGVDHRVILGDELPRFYDE.

The propeptide at 1–20 is removed in mature form; it reads MLRAGAPTAGSFRTEEVHTG. Threonine 21 (nucleophile) is an active-site residue. Lysine 53 and lysine 109 each carry N6-acetyllysine.

It belongs to the peptidase T1B family. As to quaternary structure, the 26S proteasome consists of a 20S proteasome core and two 19S regulatory subunits. The 20S proteasome core is composed of 28 subunits that are arranged in four stacked rings, resulting in a barrel-shaped structure. The two end rings are each formed by seven alpha subunits, and the two central rings are each formed by seven beta subunits. The catalytic chamber with the active sites is on the inside of the barrel. Component of the immunoproteasome, where it displaces the equivalent housekeeping subunit PSMB6. Component of the spermatoproteasome, a form of the proteasome specifically found in testis. Post-translationally, autocleaved. The resulting N-terminal Thr residue of the mature subunit is responsible for the nucleophile proteolytic activity.

The protein resides in the cytoplasm. It is found in the nucleus. The enzyme catalyses Cleavage of peptide bonds with very broad specificity.. The proteasome is a multicatalytic proteinase complex which is characterized by its ability to cleave peptides with Arg, Phe, Tyr, Leu, and Glu adjacent to the leaving group at neutral or slightly basic pH. The proteasome has an ATP-dependent proteolytic activity. This subunit is involved in antigen processing to generate class I binding peptides. The chain is Proteasome subunit beta type-9 (Psmb9) from Mus spicilegus (Steppe mouse).